The primary structure comprises 108 residues: Parvalbumin beta (108 aa).

EF-hand domains are found at residues 38-73 (KSTD…FSST) and 77-108 (LTAA…LVKA). Ca(2+) contacts are provided by Asp51, Asp53, Ser55, Phe57, Glu59, Glu62, Asp90, Asp92, Asp94, Lys96, and Glu101.

It belongs to the parvalbumin family.

Functionally, in muscle, parvalbumin is thought to be involved in relaxation after contraction. It binds two calcium ions. The protein is Parvalbumin beta of Graptemys geographica (Common map turtle).